We begin with the raw amino-acid sequence, 234 residues long: NAD-dependent protein deacylase (234 aa).

The Deacetylase sirtuin-type domain occupies 1–234 (MTKQVRIVVL…LVPHYLAQFL (234 aa)). 12–31 (GAGISAESGIRTFRATDGLW) provides a ligand contact to NAD(+). 2 residues coordinate substrate: Y56 and R59. An NAD(+)-binding site is contributed by 93–96 (QNVD). H111 functions as the Proton acceptor in the catalytic mechanism. Residues C119 and C138 each coordinate Zn(2+). NAD(+) is bound by residues 178–180 (GTS), 204–206 (NLE), and A222.

Belongs to the sirtuin family. Class III subfamily. Requires Zn(2+) as cofactor.

Its subcellular location is the cytoplasm. The enzyme catalyses N(6)-acetyl-L-lysyl-[protein] + NAD(+) + H2O = 2''-O-acetyl-ADP-D-ribose + nicotinamide + L-lysyl-[protein]. The catalysed reaction is N(6)-succinyl-L-lysyl-[protein] + NAD(+) + H2O = 2''-O-succinyl-ADP-D-ribose + nicotinamide + L-lysyl-[protein]. Functionally, NAD-dependent lysine deacetylase and desuccinylase that specifically removes acetyl and succinyl groups on target proteins. Modulates the activities of several proteins which are inactive in their acylated form. This is NAD-dependent protein deacylase from Pasteurella multocida (strain Pm70).